Here is an 84-residue protein sequence, read N- to C-terminus: Large ribosomal subunit protein bL27 (84 aa).

This sequence belongs to the bacterial ribosomal protein bL27 family.

The protein is Large ribosomal subunit protein bL27 of Salinispora tropica (strain ATCC BAA-916 / DSM 44818 / JCM 13857 / NBRC 105044 / CNB-440).